The following is a 393-amino-acid chain: tRNA-specific 2-thiouridylase MnmA (393 aa).

ATP contacts are provided by residues 19–26 (AMSGGVDS) and leucine 45. Cysteine 113 acts as the Nucleophile in catalysis. Cysteines 113 and 210 form a disulfide. Glycine 137 provides a ligand contact to ATP. Residues 160-162 (RDQ) form an interaction with tRNA region. The Cysteine persulfide intermediate role is filled by cysteine 210.

The protein belongs to the MnmA/TRMU family.

The protein localises to the cytoplasm. The enzyme catalyses S-sulfanyl-L-cysteinyl-[protein] + uridine(34) in tRNA + AH2 + ATP = 2-thiouridine(34) in tRNA + L-cysteinyl-[protein] + A + AMP + diphosphate + H(+). Functionally, catalyzes the 2-thiolation of uridine at the wobble position (U34) of tRNA, leading to the formation of s(2)U34. In Afipia carboxidovorans (strain ATCC 49405 / DSM 1227 / KCTC 32145 / OM5) (Oligotropha carboxidovorans), this protein is tRNA-specific 2-thiouridylase MnmA.